Here is a 179-residue protein sequence, read N- to C-terminus: Large ribosomal subunit protein uL5 (179 aa).

It belongs to the universal ribosomal protein uL5 family. In terms of assembly, part of the 50S ribosomal subunit; part of the 5S rRNA/L5/L18/L25 subcomplex. Contacts the 5S rRNA and the P site tRNA. Forms a bridge to the 30S subunit in the 70S ribosome.

Functionally, this is one of the proteins that bind and probably mediate the attachment of the 5S RNA into the large ribosomal subunit, where it forms part of the central protuberance. In the 70S ribosome it contacts protein S13 of the 30S subunit (bridge B1b), connecting the 2 subunits; this bridge is implicated in subunit movement. Contacts the P site tRNA; the 5S rRNA and some of its associated proteins might help stabilize positioning of ribosome-bound tRNAs. The polypeptide is Large ribosomal subunit protein uL5 (Bordetella avium (strain 197N)).